Consider the following 207-residue polypeptide: Outer-membrane lipoprotein LolB (207 aa).

The first 26 residues, 1–26, serve as a signal peptide directing secretion; the sequence is MSKLKIDTKRRFSLLIALVLIISLSS. C27 is lipidated: N-palmitoyl cysteine. C27 carries the S-diacylglycerol cysteine lipid modification.

It belongs to the LolB family. As to quaternary structure, monomer.

It localises to the cell outer membrane. Functionally, plays a critical role in the incorporation of lipoproteins in the outer membrane after they are released by the LolA protein. The polypeptide is Outer-membrane lipoprotein LolB (Francisella tularensis subsp. tularensis (strain FSC 198)).